The chain runs to 281 residues: uncharacterized protein (281 aa).

The stretch at 242-281 (IDKQSRKKNIIREINDIKSKINDLSNYMDNLISELDDLFD) forms a coiled coil.

This is an uncharacterized protein from Acanthamoeba polyphaga (Amoeba).